We begin with the raw amino-acid sequence, 964 residues long: Probable LRR receptor-like serine/threonine-protein kinase IRK (964 aa).

A signal peptide spans 1 to 20 (MYKALIFTVLLVSAVAPVRS). Residues 21–603 (LDPPLNDDVL…GHKRILLSIS (583 aa)) lie on the Extracellular side of the membrane. LRR repeat units lie at residues 92-116 (LQFL…MLLS), 117-141 (LVNL…FFRQ), 143-166 (GSLR…ISSC), 168-190 (SLAA…IWSL), 191-214 (NTLR…IDRL), 215-238 (NNLR…IGSC), 240-261 (LLKT…TFQQ), 263-286 (SLCY…IGEM), 287-310 (RSLE…IGNL), 312-334 (ALKV…TANC), and 335-358 (INLL…LFQD). A glycan (N-linked (GlcNAc...) asparagine) is linked at asparagine 104. The N-linked (GlcNAc...) asparagine glycan is linked to asparagine 173. A glycan (N-linked (GlcNAc...) asparagine) is linked at asparagine 317. Asparagine 370 carries N-linked (GlcNAc...) asparagine glycosylation. 7 LRR repeats span residues 375–399 (IKKI…LGDL), 400–423 (RDLE…IGEL), 425–447 (HLSV…TGGA), 448–471 (VSLE…IKNC), 472–495 (SSLR…LAKL), 496–519 (TRLE…LANL), and 521–544 (YLHT…IFNG). A glycan (N-linked (GlcNAc...) asparagine) is linked at asparagine 470. Asparagine 526, asparagine 562, and asparagine 578 each carry an N-linked (GlcNAc...) asparagine glycan. A helical transmembrane segment spans residues 604–624 (SLIAISAAAAIVVGVIAITVL). Residues 625-964 (NLRVRASTVS…SGSSDELGSS (340 aa)) are Cytoplasmic-facing. The Protein kinase domain occupies 678 to 951 (LNKDCELGRG…GEAVNILRMI (274 aa)). Residues 684 to 692 (LGRGGFGAV) and lysine 706 each bind ATP.

The protein belongs to the protein kinase superfamily. Ser/Thr protein kinase family. As to quaternary structure, interacts with IRKI. Autophosphorylated. Highly expressed in root tips, shoot apices and developing flowers.

It is found in the cell membrane. It carries out the reaction L-seryl-[protein] + ATP = O-phospho-L-seryl-[protein] + ADP + H(+). It catalyses the reaction L-threonyl-[protein] + ATP = O-phospho-L-threonyl-[protein] + ADP + H(+). This is Probable LRR receptor-like serine/threonine-protein kinase IRK from Arabidopsis thaliana (Mouse-ear cress).